The primary structure comprises 352 residues: Isoflavone-7-O-methyltransferase 9 (352 aa).

Residue 118–127 (VLDPTLSGSY) participates in substrate binding. S-adenosyl-L-methionine is bound by residues Gly-196, Asp-219, Asp-239, Met-240, and Lys-253. His-257 (proton acceptor) is an active-site residue.

This sequence belongs to the class I-like SAM-binding methyltransferase superfamily. Cation-independent O-methyltransferase family. COMT subfamily. Homodimer.

It catalyses the reaction a 7-hydroxyisoflavone + S-adenosyl-L-methionine = a 7-methoxyisoflavone + S-adenosyl-L-homocysteine + H(+). It participates in phytoalexin biosynthesis; medicarpin biosynthesis. Its function is as follows. Transfers a methyl group to 7-hydroxyls of the isoflavones daidzein, genistein and 6,7,4'-trihydroxyisoflavone. Can also methylate (+)6a-hydroxymaackiain with lower efficiency. The polypeptide is Isoflavone-7-O-methyltransferase 9 (Medicago sativa (Alfalfa)).